Reading from the N-terminus, the 102-residue chain is VDAPADMVIKAPAGAKVTKAPVAFSHKGHASMDCKTCHHKWDGAGAIQPCQASGCHANTESKKGDDSFYMAFHERKSEKSCVGCHKSMKKGPTKCTECHPKN.

16 residues coordinate heme c: His-26, His-29, Cys-34, Cys-37, His-38, His-39, Cys-50, Cys-55, His-56, His-73, Cys-81, Cys-84, His-85, Cys-95, Cys-98, and His-99.

It depends on heme as a cofactor.

The protein resides in the periplasm. In terms of biological role, participates in sulfate respiration coupled with phosphorylation by transferring electrons from the enzyme dehydrogenase to ferredoxin. This is Cytochrome c3 from Desulfovibrio desulfuricans.